The primary structure comprises 301 residues: Probable alpha-L-glutamate ligase (301 aa).

The 184-residue stretch at 104–287 (LQLLSRKGVG…VAALVMEFIE (184 aa)) folds into the ATP-grasp domain. Residues K141, 178 to 179 (EY), D187, and 211 to 213 (RSN) contribute to the ATP site. Mg(2+)-binding residues include D248, E260, and N262. Positions 248, 260, and 262 each coordinate Mn(2+).

The protein belongs to the RimK family. Mg(2+) serves as cofactor. Mn(2+) is required as a cofactor.

The sequence is that of Probable alpha-L-glutamate ligase from Saccharophagus degradans (strain 2-40 / ATCC 43961 / DSM 17024).